A 353-amino-acid chain; its full sequence is Rhodopsin (353 aa).

The Extracellular segment spans residues 1–36; that stretch reads MNGTEGPFFYVPMVNTTGIVRSPYEYPQYYLVNPAA. N2 and N15 each carry an N-linked (GlcNAc...) asparagine glycan. Residues 37–61 traverse the membrane as a helical segment; sequence YAALGAYMFLLILVGFPINFLTLYV. Over 62–73 the chain is Cytoplasmic; the sequence is TIEHKKLRTPLN. The chain crosses the membrane as a helical span at residues 74 to 96; it reads YILLNLAVADLFMVLGGFTTTMY. Over 97–110 the chain is Extracellular; the sequence is TSMHGYFVLGRLGC. An intrachain disulfide couples C110 to C187. The chain crosses the membrane as a helical span at residues 111–133; the sequence is NIEGFFATLGGEIALWSLVVLAI. The short motif at 134-136 is the 'Ionic lock' involved in activated form stabilization element; sequence ERW. The Cytoplasmic segment spans residues 134–152; that stretch reads ERWVVVCKPISNFRFGENH. A helical transmembrane segment spans residues 153–173; that stretch reads AIMGLAFTWTMAMACAAPPLV. Residues 174 to 202 are Extracellular-facing; sequence GWSRYIPEGMQCSCGIDYYTRAEGFNNES. N200 carries N-linked (GlcNAc...) asparagine glycosylation. The chain crosses the membrane as a helical span at residues 203-224; that stretch reads FVIYMFICHFTIPLTVVFFCYG. Topologically, residues 225–252 are cytoplasmic; that stretch reads RLLCAVKEAAAAQQESETTQRAEKEVTR. The chain crosses the membrane as a helical span at residues 253 to 274; it reads MVIMMVIAFLVCWLPYASVAWY. The Extracellular segment spans residues 275–286; the sequence is IFTHQGSEFGPV. A helical membrane pass occupies residues 287 to 308; that stretch reads FMTIPAFFAKSSSIYNPMIYIC. Position 296 is an N6-(retinylidene)lysine (K296). The Cytoplasmic portion of the chain corresponds to 309 to 353; it reads LNKQFRHCMITTLCCGKNPFEEEEGASTASKTEASSVSSSSVSPA. 2 S-palmitoyl cysteine lipidation sites follow: C322 and C323. The disordered stretch occupies residues 331-353; it reads EEGASTASKTEASSVSSSSVSPA. Positions 334-353 are enriched in low complexity; that stretch reads ASTASKTEASSVSSSSVSPA.

Belongs to the G-protein coupled receptor 1 family. Opsin subfamily. In terms of processing, phosphorylated on some or all of the serine and threonine residues present in the C-terminal region. Post-translationally, contains one covalently linked retinal chromophore.

Its subcellular location is the membrane. It is found in the cell projection. It localises to the cilium. The protein localises to the photoreceptor outer segment. Photoreceptor required for image-forming vision at low light intensity. While most salt water fish species use retinal as chromophore, most freshwater fish use 3-dehydroretinal, or a mixture of retinal and 3-dehydroretinal. Light-induced isomerization of 11-cis to all-trans retinal triggers a conformational change that activates signaling via G-proteins. Subsequent receptor phosphorylation mediates displacement of the bound G-protein alpha subunit by arrestin and terminates signaling. The protein is Rhodopsin (rho) of Diplodus annularis (Annular seabream).